The chain runs to 504 residues: Kinesin light chain 3 (504 aa).

The stretch at Ala-90–Leu-150 forms a coiled coil. The interval Leu-153–Gln-197 is disordered. Residues Pro-158 to Ser-167 are compositionally biased toward low complexity. Phosphoserine is present on Ser-173. TPR repeat units lie at residues Leu-207 to Ser-240, Ala-249 to Thr-282, Ala-291 to Val-324, Ala-333 to Leu-366, and Ala-375 to Pro-408. The segment at Leu-411–Ser-438 is disordered. Ser-466 is modified (phosphoserine). The segment at Val-472–His-504 is disordered. The segment covering Leu-494–His-504 has biased composition (polar residues). Thr-498 is subject to Phosphothreonine. Ser-502 bears the Phosphoserine mark.

This sequence belongs to the kinesin light chain family. In terms of assembly, oligomer composed of two heavy chains and two light chains. Associates with microtubulin in an ATP-dependent manner. Interacts with KIF5C. Interacts with ODF1. Interacts with LRGUK. Interacts with VDAC2.

The protein resides in the cytoplasm. It is found in the cytoskeleton. Its subcellular location is the mitochondrion. Its function is as follows. Kinesin is a microtubule-associated force-producing protein that may play a role in organelle transport. Plays a role during spermiogenesis in the development of the sperm tail midpiece and in the normal function of spermatozoa. May play a role in the formation of the mitochondrial sheath formation in the developing spermatid midpiece. This is Kinesin light chain 3 (KLC3) from Homo sapiens (Human).